A 154-amino-acid chain; its full sequence is Ribonuclease HI (154 aa).

The RNase H type-1 domain maps to 1–142 (MTKHVEIFTD…CDELARTAAE (142 aa)). Mg(2+) is bound by residues D10, E48, D70, and D134.

Belongs to the RNase H family. Monomer. Requires Mg(2+) as cofactor.

The protein localises to the cytoplasm. It carries out the reaction Endonucleolytic cleavage to 5'-phosphomonoester.. Functionally, endonuclease that specifically degrades the RNA of RNA-DNA hybrids. The chain is Ribonuclease HI from Vibrio parahaemolyticus serotype O3:K6 (strain RIMD 2210633).